Here is a 117-residue protein sequence, read N- to C-terminus: uncharacterized protein (117 aa).

This is an uncharacterized protein from Escherichia coli O157:H7.